A 125-amino-acid polypeptide reads, in one-letter code: Large ribosomal subunit protein bL12 (125 aa).

This sequence belongs to the bacterial ribosomal protein bL12 family. Homodimer. Part of the ribosomal stalk of the 50S ribosomal subunit. Forms a multimeric L10(L12)X complex, where L10 forms an elongated spine to which 2 to 4 L12 dimers bind in a sequential fashion. Binds GTP-bound translation factors.

Its function is as follows. Forms part of the ribosomal stalk which helps the ribosome interact with GTP-bound translation factors. Is thus essential for accurate translation. The sequence is that of Large ribosomal subunit protein bL12 from Ruegeria sp. (strain TM1040) (Silicibacter sp.).